Reading from the N-terminus, the 72-residue chain is Translation initiation factor IF-1 (72 aa).

The S1-like domain occupies Met-1 to Lys-72.

This sequence belongs to the IF-1 family. As to quaternary structure, component of the 30S ribosomal translation pre-initiation complex which assembles on the 30S ribosome in the order IF-2 and IF-3, IF-1 and N-formylmethionyl-tRNA(fMet); mRNA recruitment can occur at any time during PIC assembly.

Its subcellular location is the cytoplasm. Its function is as follows. One of the essential components for the initiation of protein synthesis. Stabilizes the binding of IF-2 and IF-3 on the 30S subunit to which N-formylmethionyl-tRNA(fMet) subsequently binds. Helps modulate mRNA selection, yielding the 30S pre-initiation complex (PIC). Upon addition of the 50S ribosomal subunit IF-1, IF-2 and IF-3 are released leaving the mature 70S translation initiation complex. The protein is Translation initiation factor IF-1 of Francisella tularensis subsp. tularensis (strain WY96-3418).